We begin with the raw amino-acid sequence, 172 residues long: Protein/nucleic acid deglycase 2 (172 aa).

Positions 3–171 constitute a PfpI endopeptidase domain; sequence KKIAVLITDE…FNREALRLLG (169 aa). The active-site Nucleophile is the Cys-104.

This sequence belongs to the peptidase C56 family. Exists in monomeric, trimeric, and hexameric forms.

Its subcellular location is the cytoplasm. It carries out the reaction N(omega)-(1-hydroxy-2-oxopropyl)-L-arginyl-[protein] + H2O = lactate + L-arginyl-[protein] + H(+). The catalysed reaction is N(6)-(1-hydroxy-2-oxopropyl)-L-lysyl-[protein] + H2O = lactate + L-lysyl-[protein] + H(+). It catalyses the reaction S-(1-hydroxy-2-oxopropyl)-L-cysteinyl-[protein] + H2O = lactate + L-cysteinyl-[protein] + H(+). The enzyme catalyses N(omega)-(1-hydroxy-2-oxoethyl)-L-arginyl-[protein] + H2O = L-arginyl-[protein] + glycolate + H(+). It carries out the reaction N(6)-(1-hydroxy-2-oxoethyl)-L-lysyl-[protein] + H2O = glycolate + L-lysyl-[protein] + H(+). The catalysed reaction is S-(1-hydroxy-2-oxoethyl)-L-cysteinyl-[protein] + H2O = glycolate + L-cysteinyl-[protein] + H(+). It catalyses the reaction N(2)-(1-hydroxy-2-oxopropyl)-dGTP + H2O = lactate + dGTP + H(+). The enzyme catalyses N(2)-(1-hydroxy-2-oxopropyl)-GTP + H2O = lactate + GTP + H(+). It carries out the reaction N(2)-(1-hydroxy-2-oxopropyl)-GDP + H2O = lactate + GDP + H(+). The catalysed reaction is N(2)-(1-hydroxy-2-oxopropyl)-GMP + H2O = lactate + GMP + H(+). It catalyses the reaction N(2)-(1-hydroxy-2-oxoethyl)-dGTP + H2O = dGTP + glycolate + H(+). The enzyme catalyses N(2)-(1-hydroxy-2-oxoethyl)-GTP + H2O = glycolate + GTP + H(+). It carries out the reaction N(2)-(1-hydroxy-2-oxoethyl)-GDP + H2O = glycolate + GDP + H(+). The catalysed reaction is N(2)-(1-hydroxy-2-oxoethyl)-GMP + H2O = glycolate + GMP + H(+). It catalyses the reaction an N(2)-(1-hydroxy-2-oxopropyl)-guanosine in RNA + H2O = a guanosine in RNA + lactate + H(+). The enzyme catalyses an N(2)-(1-hydroxy-2-oxopropyl)-2'-deoxyguanosine in DNA + H2O = a 2'-deoxyguanosine in DNA + lactate + H(+). It carries out the reaction an N(2)-(1-hydroxy-2-oxoethyl)-guanosine in RNA + H2O = a guanosine in RNA + glycolate + H(+). The catalysed reaction is an N(2)-(1-hydroxy-2-oxoethyl)-2'-deoxyguanosine in DNA + H2O = a 2'-deoxyguanosine in DNA + glycolate + H(+). With respect to regulation, glyoxalase activity is inhibited by zinc ions at pH 7.0. Functionally, protein and nucleotide deglycase that catalyzes the deglycation of the Maillard adducts formed between amino groups of proteins or nucleotides and reactive carbonyl groups of glyoxals. Thus, functions as a protein deglycase that repairs methylglyoxal- and glyoxal-glycated proteins, and releases repaired proteins and lactate or glycolate, respectively. Deglycates cysteine, arginine and lysine residues in proteins, and thus reactivates these proteins by reversing glycation by glyoxals. Is able to repair glycated serum albumin, collagen, glyceraldehyde-3-phosphate dehydrogenase, and fructose biphosphate aldolase. Acts on early glycation intermediates (hemithioacetals and aminocarbinols), preventing the formation of advanced glycation endproducts (AGE) that cause irreversible damage. Also functions as a nucleotide deglycase able to repair glycated guanine in the free nucleotide pool (GTP, GDP, GMP, dGTP) and in DNA and RNA. Is thus involved in a major nucleotide repair system named guanine glycation repair (GG repair), dedicated to reversing methylglyoxal and glyoxal damage via nucleotide sanitization and direct nucleic acid repair. In vitro, prevents acrylamide formation in asparagine/glyoxal and asparagine/sugar mixtures at 55 degrees Celsius, likely by degrading asparagine/glyoxal Maillard adducts formed at high temperatures. Also displays an apparent glyoxalase activity that in fact reflects its deglycase activity. Is a general stress protein; is required for the protection of bacterial cells against many environmental stresses, including oxidative, thermal, osmotic, UV, and pH stresses. And plays an important role in protection against electrophile/carbonyl stress. The protein is Protein/nucleic acid deglycase 2 (yhbO) of Escherichia coli (strain K12).